Reading from the N-terminus, the 388-residue chain is Na(+)/H(+) antiporter NhaA (388 aa).

Over 1-11 the chain is Cytoplasmic; that stretch reads MKHLHRFFSSD. A helical membrane pass occupies residues 12 to 31; sequence ASGGIILIIAAILAMIMANS. The Periplasmic segment spans residues 32-58; sequence GATSGWYHDFLETPVQLRVGSLEINKN. The chain crosses the membrane as a helical span at residues 59–80; that stretch reads MLLWINDALMAVFFLLVGLEVK. The Cytoplasmic portion of the chain corresponds to 81–96; it reads RELMQGSLASLLQAAF. The chain crosses the membrane as a helical span at residues 97-116; that stretch reads PVIAAIGGMIVPALLYLAFN. Residues 117-122 are Periplasmic-facing; the sequence is YADPIT. Residues 123 to 130 traverse the membrane as a helical segment; sequence REGWAIPA. The Cytoplasmic segment spans residues 131-154; it reads ATDIAFALGVLALLGSRVPLVLKI. Residues 155-176 traverse the membrane as a helical segment; that stretch reads FLMALAIIDDLGAIIIIALFYT. The Periplasmic segment spans residues 177-180; it reads NDLS. Residues 181 to 200 form a helical membrane-spanning segment; the sequence is MASLGVAAVAIAVLAVLNLC. The Cytoplasmic segment spans residues 201 to 204; sequence GVRR. A helical membrane pass occupies residues 205-222; the sequence is TGVYILVGVVLWTAVLKS. Position 223 (G223) is a topological domain, periplasmic. The helical transmembrane segment at 224-236 threads the bilayer; that stretch reads VHATLAGVIVGFF. Residues 237–253 are Cytoplasmic-facing; it reads IPLKEKHGRSPAKRLEH. Residues 254–272 traverse the membrane as a helical segment; it reads VLHPWVAYLILPLFAFANA. The Periplasmic segment spans residues 273-286; sequence GVSLQGVTLDGLTS. Residues 287-310 traverse the membrane as a helical segment; it reads ILPLGIIAGLLIGKPLGISLFCWL. Residues 311–339 are Cytoplasmic-facing; it reads ALRLKLAHLPEGTTYQQIMVVGILCGIGF. A helical membrane pass occupies residues 340–350; sequence TMSIFIASLAF. The Periplasmic portion of the chain corresponds to 351–357; that stretch reads GSVDPEL. A helical transmembrane segment spans residues 358 to 380; it reads INWAKLGILVGSISSAVIGYSWL. At 381 to 388 the chain is on the cytoplasmic side; it reads RVRLRPSV.

This sequence belongs to the NhaA Na(+)/H(+) (TC 2.A.33) antiporter family.

The protein resides in the cell inner membrane. The catalysed reaction is Na(+)(in) + 2 H(+)(out) = Na(+)(out) + 2 H(+)(in). Its function is as follows. Na(+)/H(+) antiporter that extrudes sodium in exchange for external protons. This is Na(+)/H(+) antiporter NhaA from Shigella flexneri serotype 5b (strain 8401).